The following is a 226-amino-acid chain: Adenylate kinase (226 aa).

Residue 11 to 16 (GSGKGT) coordinates ATP. Residues 31–64 (SAGEILKHALSVTKFHFNFNTDNMLNQINSGNLV) are NMP. AMP-binding positions include 62-64 (NLV), 90-93 (GFPR), and Gln97. The tract at residues 127–164 (GRQVHIKSGRTYHIKFNPPKLDGIDDITGEKLVIRADD) is LID. Residues Arg128 and 137–138 (TY) each bind ATP. AMP-binding residues include Arg161 and Arg172. An ATP-binding site is contributed by Gln205.

This sequence belongs to the adenylate kinase family. As to quaternary structure, monomer.

It is found in the cytoplasm. It carries out the reaction AMP + ATP = 2 ADP. It functions in the pathway purine metabolism; AMP biosynthesis via salvage pathway; AMP from ADP: step 1/1. Functionally, catalyzes the reversible transfer of the terminal phosphate group between ATP and AMP. Plays an important role in cellular energy homeostasis and in adenine nucleotide metabolism. The sequence is that of Adenylate kinase from Blochmanniella floridana.